The primary structure comprises 334 residues: Formamidase (334 aa).

One can recognise a CN hydrolase domain in the interval 14–260; the sequence is FLVAAIQFPV…WEIVTGEIYP (247 aa). The Proton acceptor role is filled by Glu-60. Lys-133 functions as the Proton donor in the catalytic mechanism. Cys-166 (nucleophile) is an active-site residue.

The protein belongs to the carbon-nitrogen hydrolase superfamily. Aliphatic amidase family. Homotetramer.

The catalysed reaction is formamide + H2O = formate + NH4(+). Its activity is regulated as follows. Inhibited by iodoacetate. Appears to be regulated by the fur protein, but this effect is not mediated at the transcriptional level. Its function is as follows. Is an aliphatic amidase with a restricted substrate specificity, as it only hydrolyzes formamide. Probably involved in the nitrogen metabolism of H.pylori. This chain is Formamidase (amiF), found in Helicobacter pylori (strain ATCC 700392 / 26695) (Campylobacter pylori).